The following is a 131-amino-acid chain: Fluoride-specific ion channel FluC 2 (131 aa).

4 helical membrane-spanning segments follow: residues 4-24 (IIQGLLFVALGSVFGGMARFW), 46-66 (VSGAFAIGVFGALAASGHGVF), 71-91 (PWLFAVTGFLGCYTTVSSFAL), and 105-125 (AISNVTFSLVFCLIAVALGFA). Na(+) is bound by residues G81 and T84.

The protein belongs to the fluoride channel Fluc/FEX (TC 1.A.43) family.

Its subcellular location is the cell inner membrane. The catalysed reaction is fluoride(in) = fluoride(out). Its activity is regulated as follows. Na(+) is not transported, but it plays an essential structural role and its presence is essential for fluoride channel function. Fluoride-specific ion channel. Important for reducing fluoride concentration in the cell, thus reducing its toxicity. The chain is Fluoride-specific ion channel FluC 2 from Rhodopseudomonas palustris (strain BisB18).